Here is a 457-residue protein sequence, read N- to C-terminus: tRNA modification GTPase MnmE (457 aa).

(6S)-5-formyl-5,6,7,8-tetrahydrofolate is bound by residues R25, E87, and R126. The region spanning 223–377 is the TrmE-type G domain; the sequence is GISTAIIGRP…IEERINNLFF (155 aa). Position 233 (N233) interacts with K(+). GTP-binding positions include 233-238, 252-258, and 277-280; these read NVGKSS, TDIAGTT, and DTAG. S237 serves as a coordination point for Mg(2+). The K(+) site is built by T252, I254, and T257. T258 is a Mg(2+) binding site. K457 serves as a coordination point for (6S)-5-formyl-5,6,7,8-tetrahydrofolate.

Belongs to the TRAFAC class TrmE-Era-EngA-EngB-Septin-like GTPase superfamily. TrmE GTPase family. As to quaternary structure, homodimer. Heterotetramer of two MnmE and two MnmG subunits. The cofactor is K(+).

It is found in the cytoplasm. In terms of biological role, exhibits a very high intrinsic GTPase hydrolysis rate. Involved in the addition of a carboxymethylaminomethyl (cmnm) group at the wobble position (U34) of certain tRNAs, forming tRNA-cmnm(5)s(2)U34. The protein is tRNA modification GTPase MnmE of Streptococcus pneumoniae serotype 2 (strain D39 / NCTC 7466).